We begin with the raw amino-acid sequence, 213 residues long: MKKQTLRIGVGGPVGSGKTALLRSLCSAMRDYYNIAVVTNDIYTQEDAKFLTQHEALDADRILGVETGGCPHTAIREDASMNLAAIDQLLERHGALDVVFVESGGDNLSATFSPELSDFTIYVIDVSAGDKIPRKGGPGITKSDLLIINKTDLAPLVGASLDVMAHDAKIQRGDRPFIFSNLKSAQGLDEIIQIIVSEGMLEAKEIPAAKAVV.

12-19 (GPVGSGKT) contacts GTP.

This sequence belongs to the SIMIBI class G3E GTPase family. UreG subfamily. In terms of assembly, homodimer. UreD, UreF and UreG form a complex that acts as a GTP-hydrolysis-dependent molecular chaperone, activating the urease apoprotein by helping to assemble the nickel containing metallocenter of UreC. The UreE protein probably delivers the nickel.

It localises to the cytoplasm. Its function is as follows. Facilitates the functional incorporation of the urease nickel metallocenter. This process requires GTP hydrolysis, probably effectuated by UreG. This chain is Urease accessory protein UreG, found in Marinomonas sp. (strain MWYL1).